The sequence spans 622 residues: 1-deoxy-D-xylulose-5-phosphate synthase (622 aa).

Thiamine diphosphate is bound by residues His80 and 121–123 (GHS). Asp152 contributes to the Mg(2+) binding site. Thiamine diphosphate contacts are provided by residues 153 to 154 (GA), Asn181, Tyr288, and Glu370. Asn181 contacts Mg(2+).

It belongs to the transketolase family. DXPS subfamily. As to quaternary structure, homodimer. Mg(2+) is required as a cofactor. The cofactor is thiamine diphosphate.

The enzyme catalyses D-glyceraldehyde 3-phosphate + pyruvate + H(+) = 1-deoxy-D-xylulose 5-phosphate + CO2. Its pathway is metabolic intermediate biosynthesis; 1-deoxy-D-xylulose 5-phosphate biosynthesis; 1-deoxy-D-xylulose 5-phosphate from D-glyceraldehyde 3-phosphate and pyruvate: step 1/1. In terms of biological role, catalyzes the acyloin condensation reaction between C atoms 2 and 3 of pyruvate and glyceraldehyde 3-phosphate to yield 1-deoxy-D-xylulose-5-phosphate (DXP). The polypeptide is 1-deoxy-D-xylulose-5-phosphate synthase (Shewanella oneidensis (strain ATCC 700550 / JCM 31522 / CIP 106686 / LMG 19005 / NCIMB 14063 / MR-1)).